Here is a 112-residue protein sequence, read N- to C-terminus: UPF0342 protein SPH_1504 (112 aa).

This sequence belongs to the UPF0342 family.

This is UPF0342 protein SPH_1504 from Streptococcus pneumoniae (strain Hungary19A-6).